The primary structure comprises 1235 residues: DNA polymerase catalytic subunit (1235 aa).

2 disordered regions span residues 640–693 and 1098–1134; these read QGRF…AGRH and AAAP…ASKP. The segment covering 650–661 has biased composition (basic and acidic residues); sequence APKRPAAAREDE. Acidic residues predominate over residues 662 to 675; the sequence is ERPEEEGEDEDERE. Residues 676-691 are compositionally biased toward basic and acidic residues; the sequence is EGGGEREPEGARETAG.

This sequence belongs to the DNA polymerase type-B family. In terms of assembly, forms a complex with the ssDNA-binding protein UL29, the DNA polymerase processivity factor, and the alkaline exonuclease. Interacts with the putative helicase-primase complex subunit UL8; this interaction may coordinate leading and lagging strand DNA synthesis at the replication fork.

It is found in the host nucleus. The enzyme catalyses DNA(n) + a 2'-deoxyribonucleoside 5'-triphosphate = DNA(n+1) + diphosphate. It catalyses the reaction Endonucleolytic cleavage to 5'-phosphomonoester.. In terms of biological role, replicates viral genomic DNA. The replication complex is composed of six viral proteins: the DNA polymerase, processivity factor, primase, primase-associated factor, helicase, and ssDNA-binding protein. Additionally, the polymerase contains an intrinsic ribonuclease H (RNase H) activity that specifically degrades RNA/DNA heteroduplexes or duplex DNA substrates in the 5' to 3' direction. Therefore, it can catalyze the excision of the RNA primers that initiate the synthesis of Okazaki fragments at a replication fork during viral DNA replication. This chain is DNA polymerase catalytic subunit, found in Human herpesvirus 1 (strain KOS) (HHV-1).